A 113-amino-acid chain; its full sequence is MKVDNFLNTYSMNSALLDRAAKARSLESSIKINDNDIVTKSKEDKALKEQTNAFEAFFLKQVLDVSLKSQNSLFGKDASDEIYSSMYNDTMSKALSGGMGFSKLLYDFLKERG.

The protein to H.pylori HP0245/JHP0230.

This is an uncharacterized protein from Campylobacter jejuni subsp. jejuni serotype O:2 (strain ATCC 700819 / NCTC 11168).